The sequence spans 574 residues: uncharacterized protein (574 aa).

The interval 297 to 327 (STASKSKKRRKDEVSGAQRNSSPLPQDAVSS) is disordered. Over residues 313-327 (AQRNSSPLPQDAVSS) the composition is skewed to polar residues.

This is an uncharacterized protein from Macaca fascicularis (Crab-eating macaque).